A 295-amino-acid polypeptide reads, in one-letter code: Glutamyl-Q tRNA(Asp) synthetase (295 aa).

L-glutamate-binding positions include 9 to 13 (RFAPT) and glutamate 45. Positions 12 to 22 (PTPSGFLHFGS) match the 'HIGH' region motif. Zn(2+) is bound by residues cysteine 101, cysteine 103, tyrosine 115, and cysteine 119. Positions 172 and 190 each coordinate L-glutamate. A 'KMSKS' region motif is present at residues 228–232 (KLGKS). Position 231 (lysine 231) interacts with ATP.

Belongs to the class-I aminoacyl-tRNA synthetase family. GluQ subfamily. Requires Zn(2+) as cofactor.

Its function is as follows. Catalyzes the tRNA-independent activation of glutamate in presence of ATP and the subsequent transfer of glutamate onto a tRNA(Asp). Glutamate is transferred on the 2-amino-5-(4,5-dihydroxy-2-cyclopenten-1-yl) moiety of the queuosine in the wobble position of the QUC anticodon. This chain is Glutamyl-Q tRNA(Asp) synthetase, found in Pseudomonas putida (strain GB-1).